A 307-amino-acid polypeptide reads, in one-letter code: MLTVTAPAKVNLHLEVLGLRSDGFHELAMVMQSIDLADSLQFTNTADAQITLRCDDSSLSTGADNLVLKAAELLRARSGFNELGVSMYLEKRIPIGAGLAGGSSDGAAALVGLNALWGLGYTAEALESMAAELGSDMPFCVAGGTQLCFGRGELLEPVPPTAEGLAVLLVKDPLVSVSTPWAYQRCKELKGKNYLEGEVAFEQRRRDLREAPWLQPLRAGCPPPLRNDLQVVVAAETQAVQVSLQLLQTLPTPLAVAMSGSGPSCFALFGDQDQCDQAAADLSPKLKAAGLKAWACSLRSDGVRIAS.

The active site involves Lys9. 94–104 (PIGAGLAGGSS) lines the ATP pocket. Asp136 is an active-site residue.

It belongs to the GHMP kinase family. IspE subfamily.

It carries out the reaction 4-CDP-2-C-methyl-D-erythritol + ATP = 4-CDP-2-C-methyl-D-erythritol 2-phosphate + ADP + H(+). It participates in isoprenoid biosynthesis; isopentenyl diphosphate biosynthesis via DXP pathway; isopentenyl diphosphate from 1-deoxy-D-xylulose 5-phosphate: step 3/6. In terms of biological role, catalyzes the phosphorylation of the position 2 hydroxy group of 4-diphosphocytidyl-2C-methyl-D-erythritol. The chain is 4-diphosphocytidyl-2-C-methyl-D-erythritol kinase from Synechococcus sp. (strain CC9902).